Here is a 1052-residue protein sequence, read N- to C-terminus: CCAAT/enhancer-binding protein zeta (1052 aa).

3 disordered regions span residues 1 to 40, 122 to 158, and 621 to 677; these read MSAD…KNGF, VENK…VSKA, and SQLD…AEKP. Over residues 23-34 the composition is skewed to acidic residues; that stretch reads EDPDEEDEEDGD. The span at 122–150 shows a compositional bias: basic and acidic residues; that stretch reads VENKKQKATEGKKTSEKKVKNKTVAEQRP. The segment covering 627–643 has biased composition (acidic residues); sequence PESDEENFVDVGDDSDD. Phosphoserine is present on residues Ser629 and Ser641. The segment covering 644–677 has biased composition (basic and acidic residues); that stretch reads EKFTDADKGTATDAVKEVESKETEPESSAEAEKP. Residue Ser837 is modified to Phosphoserine. Residues 876 to 969 form a disordered region; sequence KGAKADLEDS…QGQKKKKKSF (94 aa). The segment covering 883 to 932 has biased composition (acidic residues); that stretch reads EDSESSDGELGDLDDDEVSLGSMNDEDFEIDEDGGTFMDVSDDESEDAPE. Phosphoserine occurs at positions 958, 972, and 977. Residues 1032-1052 are disordered; sequence KKKKNFRKKMKAPQKPKRQRK.

Belongs to the CBF/MAK21 family. Ubiquitous.

It is found in the nucleus. Functionally, stimulates transcription from the HSP70 promoter. The polypeptide is CCAAT/enhancer-binding protein zeta (Cebpz) (Mus musculus (Mouse)).